Here is a 243-residue protein sequence, read N- to C-terminus: Ubiquinone/menaquinone biosynthesis C-methyltransferase UbiE (243 aa).

S-adenosyl-L-methionine-binding positions include T69, D90, and 116-117 (DA).

Belongs to the class I-like SAM-binding methyltransferase superfamily. MenG/UbiE family.

It carries out the reaction a 2-demethylmenaquinol + S-adenosyl-L-methionine = a menaquinol + S-adenosyl-L-homocysteine + H(+). The enzyme catalyses a 2-methoxy-6-(all-trans-polyprenyl)benzene-1,4-diol + S-adenosyl-L-methionine = a 5-methoxy-2-methyl-3-(all-trans-polyprenyl)benzene-1,4-diol + S-adenosyl-L-homocysteine + H(+). The protein operates within quinol/quinone metabolism; menaquinone biosynthesis; menaquinol from 1,4-dihydroxy-2-naphthoate: step 2/2. It functions in the pathway cofactor biosynthesis; ubiquinone biosynthesis. Its function is as follows. Methyltransferase required for the conversion of demethylmenaquinol (DMKH2) to menaquinol (MKH2) and the conversion of 2-polyprenyl-6-methoxy-1,4-benzoquinol (DDMQH2) to 2-polyprenyl-3-methyl-6-methoxy-1,4-benzoquinol (DMQH2). The sequence is that of Ubiquinone/menaquinone biosynthesis C-methyltransferase UbiE from Burkholderia vietnamiensis (strain G4 / LMG 22486) (Burkholderia cepacia (strain R1808)).